We begin with the raw amino-acid sequence, 743 residues long: Phosphoribosylformylglycinamidine synthase subunit PurL (743 aa).

The active site involves His-50. Tyr-53 and Lys-92 together coordinate ATP. Residue Glu-94 coordinates Mg(2+). Residues 95-98 (SHNH) and Arg-117 each bind substrate. His-96 serves as the catalytic Proton acceptor. Asp-118 contributes to the Mg(2+) binding site. Gln-241 is a binding site for substrate. Asp-269 is a Mg(2+) binding site. 313 to 315 (ESQ) contacts substrate. Positions 494 and 531 each coordinate ATP. A Mg(2+)-binding site is contributed by Asn-532. Ser-534 contributes to the substrate binding site.

Belongs to the FGAMS family. In terms of assembly, monomer. Part of the FGAM synthase complex composed of 1 PurL, 1 PurQ and 2 PurS subunits.

The protein resides in the cytoplasm. It carries out the reaction N(2)-formyl-N(1)-(5-phospho-beta-D-ribosyl)glycinamide + L-glutamine + ATP + H2O = 2-formamido-N(1)-(5-O-phospho-beta-D-ribosyl)acetamidine + L-glutamate + ADP + phosphate + H(+). The protein operates within purine metabolism; IMP biosynthesis via de novo pathway; 5-amino-1-(5-phospho-D-ribosyl)imidazole from N(2)-formyl-N(1)-(5-phospho-D-ribosyl)glycinamide: step 1/2. Its function is as follows. Part of the phosphoribosylformylglycinamidine synthase complex involved in the purines biosynthetic pathway. Catalyzes the ATP-dependent conversion of formylglycinamide ribonucleotide (FGAR) and glutamine to yield formylglycinamidine ribonucleotide (FGAM) and glutamate. The FGAM synthase complex is composed of three subunits. PurQ produces an ammonia molecule by converting glutamine to glutamate. PurL transfers the ammonia molecule to FGAR to form FGAM in an ATP-dependent manner. PurS interacts with PurQ and PurL and is thought to assist in the transfer of the ammonia molecule from PurQ to PurL. The chain is Phosphoribosylformylglycinamidine synthase subunit PurL from Sinorhizobium medicae (strain WSM419) (Ensifer medicae).